The primary structure comprises 1383 residues: MAQTHAMMSQFNGRKRVRKFFGKIPEVAEMPNLIEVQKASYDQFLMIEEPKGGRPDEGLQAVFKSVFPISDFSGTAMLEFVGYEFDLPKFDVEECRQRDLTYAAPLKVILRLIVFDIDEDTGSKDIKDIKEQGVYMGDMPLMTTNGTFIVNGTERVIVSQMHRSPGVFFDHDKGKSHSSGKLLFAARVIPYRGSWLDIEFDAKDIIYARIDRRRKIPVTSLLMALGMDGSDILSTFYDKVTYERDGEGWRVPYSVDRFKGMKLISDLIDADSGEVVAEAGKKLTVRTAKSLAEKGLKAVKVSEDDLLGCYLAEDIVNYETGEIYLEAGDEIDEKVLKILLDVRADQINILDIDHMNIGAYIRNTLKVDKNESRQDALFDIYRVMRPGEPPTIDTAEAMFHSLFFDPERYDLSAVGRVKMNLRMDLDCPDTVRVLRQEDILAVVKMLVELRDGRGEIDDIDNLGNRRVRSVGELMENQYRIGLLRMERAIKERMSSVEIDTVMPQDLINAKPAAAAVREFFGSSQLSQFMDQTNPLSEITHKRRLSALGPGGLTRERAGFEVRDVHPTHYGRICPIETPEGPNIGLINSLATFARVNKYGFIESPYRKIIDGKVTKEVIYLSAMEEAKHYVAQANSSLDSEGRFTEEFVVCRHAGEVLMAPRDHVDLMDVSPKQLVSVAAALIPFLENDDANRALMGSNMQRQAVPLVRAEAPFVGTGMEAVVARDSGAAVSAKRSGIVDQVDATRIVIRATEDLDPSKSGVDIYRLQKFQRSNQSTCINQRPLVHVGDRVEKGDIIADGPSTDLGDLALGRNVLVAFMPWNGYNYEDSILLSERIVADDVFTSIHIEEFEVAARDTKLGPEEITRDIPNVAEEALRNLDEAGIIYIGAEVQPGDILVGKITPKGESPMTPEEKLLRAIFGEKASDVRDTSMRMPPGTFGTVVEVRVFNRHGVEKDERAMAIEREEIERLAKDRDDEQSILDRNVYARLTDMLTGKVAVEGPKGFSESKKLDSTVMGRYPRSQWWQFAVEDEKLQNEIEALRKQYDESKEALQRRFMDKVEKVQRGDEMPPGVMKMVKVFVAVKRKIQPGDKMAGRHGNKGVVSRILPVEDMPFLEDGTHADIVLNPLGVPSRMNVGQILETHLGWACAGMGKKIGDLLELYQETGDILPLRQRIENLMPDDNHNEPVRQYDNESLYKLALQMKKGVSIATPVFDGAHESDINMMLEDAGLDSSGQVTLYDGRTGEPFDRPVTVGYIYMLKLHHLVDDKIHARSIGPYSLVTQQPLGGKAQFGGQRFGEMEVWALEAYGAAYTLQEMLTVKSDDVAGRTKVYEAIVRGDDTFEAGIPESFNVLVKEMRSLALNVELDDARELIAQRVLSDRVEQ.

The protein belongs to the RNA polymerase beta chain family. As to quaternary structure, the RNAP catalytic core consists of 2 alpha, 1 beta, 1 beta' and 1 omega subunit. When a sigma factor is associated with the core the holoenzyme is formed, which can initiate transcription.

The catalysed reaction is RNA(n) + a ribonucleoside 5'-triphosphate = RNA(n+1) + diphosphate. Its function is as follows. DNA-dependent RNA polymerase catalyzes the transcription of DNA into RNA using the four ribonucleoside triphosphates as substrates. The chain is DNA-directed RNA polymerase subunit beta from Bartonella tribocorum (strain CIP 105476 / IBS 506).